A 385-amino-acid chain; its full sequence is Glutamate 5-kinase (385 aa).

K17 is a binding site for ATP. Substrate is bound by residues S64, D151, and N165. Position 185-186 (185-186 (SD)) interacts with ATP. Residues 291-367 (SGTVRVDAGA…NQIDNILGYN (77 aa)) enclose the PUA domain.

The protein belongs to the glutamate 5-kinase family.

It localises to the cytoplasm. It carries out the reaction L-glutamate + ATP = L-glutamyl 5-phosphate + ADP. The protein operates within amino-acid biosynthesis; L-proline biosynthesis; L-glutamate 5-semialdehyde from L-glutamate: step 1/2. In terms of biological role, catalyzes the transfer of a phosphate group to glutamate to form L-glutamate 5-phosphate. This chain is Glutamate 5-kinase, found in Methanosarcina acetivorans (strain ATCC 35395 / DSM 2834 / JCM 12185 / C2A).